The primary structure comprises 311 residues: MKISPDQKDKKSLFKKHFAYLKLTEKELNDPKIQTLLEVAWNHFDQCRKIKERRCSNKGDIHLQAVREWLPWEFNANQLKKNSTKETTQVSENEFMGNVMLMQTICPKLVNKANWFDLTYERFIVTKPNWFKYMDLIPMIQNLPVTPSDKNSFGYAYKKISNLFETEKKTKKRIFFFNLQKNNINNMAACMLTCEIAKKNIKVALIYCEEFVSRYDKSYWKVDDDLNLLDEAKVIIFIGLGQESFHNKNYILFMTRLFINCFLKRKDVFFFSTTYSDGNGLIQTFKNQIISSANWVKHFFEQLNDLLMINI.

This is an uncharacterized protein from Mycoplasma genitalium (strain ATCC 33530 / DSM 19775 / NCTC 10195 / G37) (Mycoplasmoides genitalium).